The following is a 349-amino-acid chain: Probable G-protein coupled receptor 21 (349 aa).

Topologically, residues 1 to 32 are extracellular; the sequence is MNSTWDGNQSSHPFCLLALGYLETVRFCLLEV. 2 N-linked (GlcNAc...) asparagine glycosylation sites follow: Asn-2 and Asn-8. The chain crosses the membrane as a helical span at residues 33 to 53; it reads LIIVFLTVLIISGNIIVIFVF. The Cytoplasmic segment spans residues 54–75; it reads HCAPLLNHHSTSYFIQTMAYAD. A helical membrane pass occupies residues 76–96; the sequence is LLVGVSCLVPSLSLLYYPLPI. Residues 97–104 are Extracellular-facing; that stretch reads EEAMTCQV. A helical transmembrane segment spans residues 105 to 125; it reads FGFVVSVLKSISMASLACISI. Residues 126–147 lie on the Cytoplasmic side of the membrane; sequence DRYIAITKPLTYNTLVTPWRLR. Residues 148 to 168 traverse the membrane as a helical segment; sequence LCIFLIWLYSTLVFLPSFFHW. Topologically, residues 169–191 are extracellular; sequence GKPGYHGDVFQWCAESWHTNSYF. The helical transmembrane segment at 192 to 212 threads the bilayer; sequence TLFIVMMLYAPAALIVCFTYF. Residues 213-252 lie on the Cytoplasmic side of the membrane; the sequence is NIFRICQQHTKEISERQARFSSQNGETGEPQTCPDKRYAM. The chain crosses the membrane as a helical span at residues 253–273; the sequence is VLFRITSVFYVLWLPYIIYFL. The Extracellular portion of the chain corresponds to 274–283; the sequence is LESSTGCSSR. Residues 284–304 traverse the membrane as a helical segment; that stretch reads LASFLTTWLAISNSFCNCIIY. Residues 305–349 are Cytoplasmic-facing; that stretch reads SLSNSVFQRGLKGLSGSLCTSCASHTTAKDPYTVRCKGPPNGSHI.

Belongs to the G-protein coupled receptor 1 family.

The protein localises to the cell membrane. In terms of biological role, orphan receptor. This is Probable G-protein coupled receptor 21 (Gpr21) from Mus musculus (Mouse).